A 338-amino-acid chain; its full sequence is mRNA decay activator protein ZFP36L1 (338 aa).

Positions 1–111 (MTTTLVSATI…QKQPGSGQVN (111 aa)) are necessary and sufficient for the association with mRNA decay enzymes and mRNA decay activation. Residue S54 is modified to Phosphoserine; by MAPKAPK2. Positions 71 to 113 (LKGEPAPSLSSRDSRFRDRSFSEGGERLLPTQKQPGSGQVNSS) are disordered. Positions 82–96 (RDSRFRDRSFSEGGE) are enriched in basic and acidic residues. S90 carries the post-translational modification Phosphoserine; by PKB/AKT1. S92 carries the phosphoserine; by PKB/AKT1 and MAPKAPK2 modification. Over residues 101–113 (TQKQPGSGQVNSS) the composition is skewed to polar residues. 2 C3H1-type zinc fingers span residues 114-142 (RYKT…HGIH) and 152-180 (KYKT…HNAE). The interval 185 to 338 (LAGGRDLSAD…IFSRLSISDD (154 aa)) is necessary for mRNA decay activation. S203 carries the post-translational modification Phosphoserine; by PKB/AKT1 and MAPKAPK2. The disordered stretch occupies residues 273-338 (SPTTFLFRPM…IFSRLSISDD (66 aa)). Residues 305 to 318 (YLSSSSSSHSGSDS) are compositionally biased toward low complexity. S318 carries the post-translational modification Phosphoserine. The residue at position 334 (S334) is a Phosphoserine; by RPS6KA1.

In terms of assembly, associates with the cytoplasmic CCR4-NOT deadenylase and RNA exosome complexes to trigger ARE-containing mRNA deadenylation and decay processes. Interacts with CNOT1. Interacts (via N-terminus) with CNOT6. Interacts with CNOT7; this interaction is inhibited in response to phorbol 12-myristate 13-acetate (PMA) treatment in a p38 MAPK-dependent manner. Interacts with DCP1A. Interacts (via N-terminus) with DCP2. Interacts (via N-terminus) with EXOSC2. Interacts with XRN1. Interacts (via phosphorylated form) with YWHAB; this interaction occurs in a protein kinase AKT1-dependent manner. Interacts (via phosphorylated form) with YWHAZ; this interaction occurs in a p38 MAPK- and AKT-signaling pathways. Phosphorylated. Phosphorylated by RPS6KA1 at Ser-334 upon phorbol 12-myristate 13-acetate (PMA) treatment; this phosphorylation results in dissociation of the CCR4-NOT deadenylase complex and induces p38 MAPK-mediated stabilization of the low-density lipoprotein receptor LDLR mRNA. Phosphorylated by protein kinase AKT1 at Ser-92 and Ser-203 in response to insulin; these phosphorylations stabilize ZFP36L1, increase the association with 14-3-3 proteins and mediate ARE-containing mRNA stabilization. AKT1-mediated phosphorylation at Ser-92 does not impair ARE-containing RNA-binding. Phosphorylated at Ser-54, Ser-92 and Ser-203 by MAPKAPK2; these phosphorylations increase the association with 14-3-3 proteins and mediate ARE-containing mRNA stabilization in a protein kinase AKT1-independent manner. MAPKAPK2-mediated phosphorylations at Ser-54, Ser-92 and Ser-203 do not impair ARE-containing RNA-binding. Phosphorylations increase the association with 14-3-3 proteins and mediate ARE-containing mRNA stabilization during early adipogenesis in a p38 MAPK- and AKT-dependent manner. Post-translationally, ubiquitinated. Ubiquitination leads to proteasomal degradation, a process inhibited by phosphorylations at Ser-90, Ser-92 and Ser-203. In terms of tissue distribution, expressed in preadipocytes and adipocytes. Expressed in the proximal and distal tubules in the renal cortex (at protein level). Expressed in ovary, heart, kidney, lung, spleen and thymus. Weakly expressed in brain, liver and testis. Expressed in osteoblasts. Expressed in embryonic stem cells (ESCs). Expressed through B lymphocyte development.

The protein resides in the nucleus. It is found in the cytoplasm. The protein localises to the cytoplasmic granule. Its subcellular location is the P-body. In terms of biological role, zinc-finger RNA-binding protein that destabilizes several cytoplasmic AU-rich element (ARE)-containing mRNA transcripts by promoting their poly(A) tail removal or deadenylation, and hence provide a mechanism for attenuating protein synthesis. Acts as a 3'-untranslated region (UTR) ARE mRNA-binding adapter protein to communicate signaling events to the mRNA decay machinery. Functions by recruiting the CCR4-NOT deadenylating complex and components of the cytoplasmic RNA decay machinery to the bound ARE-containing mRNAs, and hence promotes ARE-mediated mRNA deadenylation and decay processes. Also induces the degradation of ARE-containing mRNAs even in absence of poly(A) tail. Binds to 3'-UTR ARE of numerous mRNAs. Positively regulates early adipogenesis by promoting ARE-mediated mRNA decay of immediate early genes (IEGs). Promotes ARE-mediated mRNA decay of mineralocorticoid receptor NR3C2 mRNA in response to hypertonic stress. Negatively regulates hematopoietic/erythroid cell differentiation by promoting ARE-mediated mRNA decay of the transcription factor STAT5B mRNA. Positively regulates monocyte/macrophage cell differentiation by promoting ARE-mediated mRNA decay of the cyclin-dependent kinase CDK6 mRNA. Promotes degradation of ARE-containing pluripotency-associated mRNAs in embryonic stem cells (ESCs), such as NANOG, through a fibroblast growth factor (FGF)-induced MAPK-dependent signaling pathway, and hence attenuates ESC self-renewal and positively regulates mesendoderm differentiation. May play a role in mediating pro-apoptotic effects in malignant B-cells by promoting ARE-mediated mRNA decay of BCL2 mRNA. In association with ZFP36L2 maintains quiescence on developing B lymphocytes by promoting ARE-mediated decay of several mRNAs encoding cell cycle regulators that help B cells progress through the cell cycle, and hence ensuring accurate variable-diversity-joining (VDJ) recombination and functional immune cell formation. Together with ZFP36L2 is also necessary for thymocyte development and prevention of T-cell acute lymphoblastic leukemia (T-ALL) transformation by promoting ARE-mediated mRNA decay of the oncogenic transcription factor NOTCH1 mRNA. Involved in the delivery of target ARE-mRNAs to processing bodies (PBs). In addition to its cytosolic mRNA-decay function, plays a role in the regulation of nuclear mRNA 3'-end processing; modulates mRNA 3'-end maturation efficiency of the DLL4 mRNA through binding with an ARE embedded in a weak noncanonical polyadenylation (poly(A)) signal in endothelial cells. Also involved in the regulation of stress granule (SG) and P-body (PB) formation and fusion. Plays a role in vasculogenesis and endocardial development. Involved in the regulation of keratinocyte proliferation, differentiation and apoptosis. Plays a role in myoblast cell differentiation. The chain is mRNA decay activator protein ZFP36L1 from Mus musculus (Mouse).